We begin with the raw amino-acid sequence, 2271 residues long: Serine-rich adhesin for platelets (2271 aa).

An N-terminal signal peptide occupies residues 1–89 (MSKRQKAFHD…VNMLHDQQAF (89 aa)). The interval 90–230 (AASDAPLTSE…KTSTTSTSTA (141 aa)) is serine-rich repeat region 1, SRR1. Residues 100–111 (LNTQSETVGNQN) are compositionally biased toward polar residues. Disordered regions lie at residues 100–229 (LNTQ…STST), 751–791 (NSMS…VVST), and 806–2243 (SVSA…GLLG). Residues 112-128 (STTIEASTSTADSTSVT) are compositionally biased toward low complexity. Residues 129-140 (KNSSSVQTSNSD) are compositionally biased toward polar residues. The span at 150 to 229 (VTSTTNSTSN…NKTSTTSTST (80 aa)) shows a compositional bias: low complexity. The segment at 231–751 (PVKLRTFSRL…TTFKYEVTRN (521 aa)) is non-repeat region (NRR). Composition is skewed to low complexity over residues 752–791 (SMSD…VVST), 806–1392 (SVSA…LSLS), and 1402–2214 (SNSA…ATSE). Positions 752 to 2232 (SMSDSVSTSG…AQSEKRLPDT (1481 aa)) are serine-rich repeat region 2, SRR2. The LPXTG sorting signal signature appears at 2229 to 2233 (LPDTG). A Pentaglycyl murein peptidoglycan amidated threonine modification is found at T2232. Positions 2233–2271 (GDSIKQNGLLGGVMTLLVGLGLMKRKKKKDENDQDDSQA) are cleaved as a propeptide — removed by sortase.

Belongs to the serine-rich repeat protein (SRRP) family. In terms of processing, proteolytically cleaved by a metalloprotease. Glycosylated. It is probable that most of the Ser residues in SSR1 and SSR2 are O-GlcNAcylated. Sequential glycosylation by sugar transferases are able to generate complex sugar polymorphisms.

The protein resides in the secreted. Its subcellular location is the cell wall. Functionally, mediates binding to human platelets, possibly through a receptor-ligand interaction. Probably associated with virulence in endovascular infection. The polypeptide is Serine-rich adhesin for platelets (sraP) (Staphylococcus aureus (strain USA300)).